The primary structure comprises 1406 residues: DNA-directed RNA polymerase subunit beta' (1406 aa).

Zn(2+) is bound by residues Cys-70, Cys-72, Cys-85, and Cys-88. The Mg(2+) site is built by Asp-460, Asp-462, and Asp-464. Zn(2+) contacts are provided by Cys-814, Cys-888, Cys-895, and Cys-898.

This sequence belongs to the RNA polymerase beta' chain family. In terms of assembly, the RNAP catalytic core consists of 2 alpha, 1 beta, 1 beta' and 1 omega subunit. When a sigma factor is associated with the core the holoenzyme is formed, which can initiate transcription. Requires Mg(2+) as cofactor. The cofactor is Zn(2+).

The catalysed reaction is RNA(n) + a ribonucleoside 5'-triphosphate = RNA(n+1) + diphosphate. Its function is as follows. DNA-dependent RNA polymerase catalyzes the transcription of DNA into RNA using the four ribonucleoside triphosphates as substrates. This chain is DNA-directed RNA polymerase subunit beta', found in Photorhabdus laumondii subsp. laumondii (strain DSM 15139 / CIP 105565 / TT01) (Photorhabdus luminescens subsp. laumondii).